Consider the following 133-residue polypeptide: Exosome complex protein C1739.07 (133 aa).

The disordered stretch occupies residues 96 to 133; it reads VNPKTEAVNTSNAAISSSSSNRPKVAKDAATRIIKHHT. Positions 102–116 are enriched in low complexity; that stretch reads AVNTSNAAISSSSSN.

It belongs to the C1D family. As to quaternary structure, component of the exosome multienzyme ribonuclease complex. Interacts with cut3.

The protein resides in the cytoplasm. It is found in the nucleus. Its function is as follows. Required for exosome-dependent processing of pre-rRNA and small nucleolar RNA (snRNA) precursors. Involved in processing of 35S pre-rRNA at the A0, A1 and A2 sites. This is Exosome complex protein C1739.07 from Schizosaccharomyces pombe (strain 972 / ATCC 24843) (Fission yeast).